Reading from the N-terminus, the 1420-residue chain is MSARDFVEGEAVLDDEENENEEEQEEDYDGEVHEGAGTMNHYNDSSEEEEEDDDDEEAARAIREGFIVDEDEEIEERAERRREKRKRRREEREREDEHLDEEDLELIGELNPAFQSAAATESKFKRLKRGHKDHRQASQGIDDIFNSDEDEEAAGDYGRPSHRRPMHDEMKDFIEEDVFTDDELEREREDLEIARPAKRGVTGLGATDAAGLDENALEDMRAAFGDGNEYLFALEMEEQEEEQEEDQEKHLDLKDVFEPSQLAERMLTEEDNQIRLLDEPERHQLARKPYRNLVLTEEQFREEAAWIANLMLLKKRIEPELREPFQRSVAKVLEFLVTDDWEVPFIFQHRKDYMIHATKVPVAGAPADGDTSQYTIKAEKLLNMTDLWDIFDHDLKFRALVEKRNTIQKTYDNLQSLFNVNDSVVQDMLSTAVTMEELQDVQDYVHFQYASQLRDINLMNGEANGDTHRRKATGRSFFERVRNGKAYGLVRAFGITADAFAQNALKEGRRQYTEDPAERPEEMADSFIDNDFSNASHVLKAAKALFAEEIVMSPKMRKVIRQAYYMNGAVDCFRTEKGLRRIDEQHPYYEFKYLRNQQLSDIARQPELYLRMLKAEEEGLVEVKVRFENFDHFRQRLYPDIESDNYSEIADAWNRTRREVLDMALGKLERLINRSVKENIRQECENHVAKECREAFSQRLDQAPYKPKGMVLGTVPRVLAMSTGTGIVGRDPIHWAYVEEDGRVLENGKFVDLSIGDRDRSIPDGKDVEALIELLERRRPDVIGVSGMSPETRKLYKLLTELVEKKDLRGATYTDERDEEISDPLEVVIVNDEVARLYQHSERAKKDHPSFGPLTHYCVALAKYLQSPLKEYASLGRDIVSIQFKRGQQLVAQELLLKQLETALVDMVNLVGVDINEAVTDPATANLLPYVCGLGPRKAAHLLKIVNMNGGVVNNRVELLGVNAQYPAMGVKVWNNCASFLFIDFENADPDADPLDNTRVHPEDYDIARKMAADALELDEEDIKAETDENGPGAIVRKLFRDEAQDRVNDLILEEYAEQLEKNLNQRKRATLETIRAELQQPYEELRKQFALLSTDDVFTMLTGETSDTLAEGMVVPISIKRITDDHIDGKLDCGVDVLVPESELTDRYDIPVRALYSLHQTLPAKVLFLNKKNFLCNVSLREEQVSRPTPRPRDHMRGEWDDRQEAKDREMLQEKTQSGGRVMRVIKHPLFRPFNSTQAEEFLGSQSRGDVVIRPSSKGPDHLAVTWKVADGIFQHIDVLELDKENEFSVGRTLKVGGRYTYSDLDDLIFNHVKAMAKKVDEMMLHEKYQEGSKDATYSWLNTYTKANPRRSAYAFCIDPKHPGYFQLCFKAGENAQLHSWPVKVIPQGYELQRNPYPDMRALCNGFKLLFTNMQAGKR.

3 disordered regions span residues 1–104 (MSAR…EEDL), 117–167 (AAAT…RPMH), and 1186–1208 (VSRP…QEAK). Composition is skewed to acidic residues over residues 11 to 29 (AVLD…EDYD), 45 to 57 (SSEE…DDEE), and 67 to 76 (IVDEDEEIEE). A compositionally biased stretch (basic residues) spans 125-134 (KRLKRGHKDH). Residues 145-154 (FNSDEDEEAA) show a composition bias toward acidic residues. One can recognise an SH2 domain in the interval 1230–1330 (PLFRPFNSTQ…VDEMMLHEKY (101 aa)).

The protein belongs to the SPT6 family.

It localises to the nucleus. It is found in the chromosome. Its function is as follows. Histone H3-H4 chaperone that plays a role in maintenance of chromatin structure during RNA polymerase II transcription elongation thereby repressing transcription initiation from cryptic promoters. Mediates the reassembly of nucleosomes onto the promoters of at least a selected set of genes during repression; the nucleosome reassembly is essential for transcriptional repression. Essential for viability. The chain is Transcription elongation factor spt6 (spt6) from Aspergillus fumigatus (strain ATCC MYA-4609 / CBS 101355 / FGSC A1100 / Af293) (Neosartorya fumigata).